A 221-amino-acid chain; its full sequence is ATP phosphoribosyltransferase (221 aa).

It belongs to the ATP phosphoribosyltransferase family. Short subfamily. As to quaternary structure, heteromultimer composed of HisG and HisZ subunits.

It localises to the cytoplasm. It carries out the reaction 1-(5-phospho-beta-D-ribosyl)-ATP + diphosphate = 5-phospho-alpha-D-ribose 1-diphosphate + ATP. Its pathway is amino-acid biosynthesis; L-histidine biosynthesis; L-histidine from 5-phospho-alpha-D-ribose 1-diphosphate: step 1/9. Functionally, catalyzes the condensation of ATP and 5-phosphoribose 1-diphosphate to form N'-(5'-phosphoribosyl)-ATP (PR-ATP). Has a crucial role in the pathway because the rate of histidine biosynthesis seems to be controlled primarily by regulation of HisG enzymatic activity. In Rhizorhabdus wittichii (strain DSM 6014 / CCUG 31198 / JCM 15750 / NBRC 105917 / EY 4224 / RW1) (Sphingomonas wittichii), this protein is ATP phosphoribosyltransferase.